Here is a 274-residue protein sequence, read N- to C-terminus: NH(3)-dependent NAD(+) synthetase (274 aa).

Position 46–53 (46–53 (GISGGQDS)) interacts with ATP. Mg(2+) is bound at residue aspartate 52. Arginine 140 is a binding site for deamido-NAD(+). Threonine 160 is a binding site for ATP. Glutamate 165 provides a ligand contact to Mg(2+). Deamido-NAD(+)-binding residues include lysine 173 and aspartate 180. Residues lysine 189 and threonine 211 each contribute to the ATP site. A deamido-NAD(+)-binding site is contributed by 260–261 (HK).

This sequence belongs to the NAD synthetase family. As to quaternary structure, homodimer.

The enzyme catalyses deamido-NAD(+) + NH4(+) + ATP = AMP + diphosphate + NAD(+) + H(+). Its pathway is cofactor biosynthesis; NAD(+) biosynthesis; NAD(+) from deamido-NAD(+) (ammonia route): step 1/1. Functionally, catalyzes the ATP-dependent amidation of deamido-NAD to form NAD. Uses ammonia as a nitrogen source. The protein is NH(3)-dependent NAD(+) synthetase of Pectobacterium atrosepticum (strain SCRI 1043 / ATCC BAA-672) (Erwinia carotovora subsp. atroseptica).